The chain runs to 101 residues: Small ribosomal subunit protein uS14 (101 aa).

Belongs to the universal ribosomal protein uS14 family. As to quaternary structure, part of the 30S ribosomal subunit. Contacts proteins S3 and S10.

Its function is as follows. Binds 16S rRNA, required for the assembly of 30S particles and may also be responsible for determining the conformation of the 16S rRNA at the A site. This chain is Small ribosomal subunit protein uS14, found in Aliivibrio salmonicida (strain LFI1238) (Vibrio salmonicida (strain LFI1238)).